Consider the following 695-residue polypeptide: MKVFCGRANPTTGSVEWLEEDEHYDYHQEIARSSYADMLHDKDRNMKYYQGIRAAVSRVKDRGQKALVLDIGTGTGLLSMMAVTAGADFCYAIEVFKPMADAAVKIVEKNGFSDKIKVINKHSTEVTVGPDGDMPCRANILITELFDTELIGEGALPSYEHAHRHLVQANCEAVPHRATVYAQLVESRRMWSWNKLFPIRVQTSRGERVIIPPLELERCPGAPSVCDIQLNQVSPADFTILSDVLPMFSVDFSKQVSSSAACHSRQFEPLVSGRAQVVLSWWDIEMDPEGKIKCTMAPSWAHSDPEELQWRDHWMQCVYFLPQEEPVVQGLALCLVAYHDDYCVWYSLQKTSPEKNGRVHPVRPVCDCQAHLLWNRPRFGEINDRNRTDQYIQALRTVLKPDSVCLCVSDGSLLSMLAYHLGVEQVFTIENSAVSHRLMKKIFKANHLEDKINIIEKRPELLTPADLEGKKVSLLLGEPFFTTSLLPWHNLYFWYVRTAVDQHLGPGAVVMPQAASLHVVVVEFRDLWRIRSPCGDCEGFDVHIMDDMIKRALDFRESKEAEPHPLWEYPCSSLSEPQQILTFDFRQPVPLQPIHAEGTIELRRCGRSHGAVLWMEYHLTADSTVSTGLLKSAEDEGDCCWNPHCKQAVYFFNTTLDPRAPPGSSQTVTYTVEFHPHTGDITMDFTLSDALDSGC.

SAM-dependent MTase PRMT-type domains lie at 14-345 (SVEW…YCVW) and 358-684 (RVHP…ITMD). Arg-32 carries the post-translational modification Omega-N-methylarginine. Active-site residues include Glu-144 and Glu-153.

The protein belongs to the class I-like SAM-binding methyltransferase superfamily. Protein arginine N-methyltransferase family. PRMT7 subfamily. In terms of assembly, homodimer and heterodimer. Interacts with CTCFL, PRMT5 and SNRPD3.

The protein localises to the cytoplasm. Its subcellular location is the cytosol. It is found in the nucleus. It carries out the reaction L-arginyl-[protein] + S-adenosyl-L-methionine = N(omega)-methyl-L-arginyl-[protein] + S-adenosyl-L-homocysteine + H(+). Arginine methyltransferase that can both catalyze the formation of omega-N monomethylarginine (MMA) and symmetrical dimethylarginine (sDMA), with a preference for the formation of MMA. Specifically mediates the symmetrical dimethylation of arginine residues in the small nuclear ribonucleoproteins Sm D1 (SNRPD1) and Sm D3 (SNRPD3); such methylation being required for the assembly and biogenesis of snRNP core particles. Specifically mediates the symmetric dimethylation of histone H4 'Arg-3' to form H4R3me2s. Plays a role in gene imprinting by being recruited by CTCFL at the H19 imprinted control region (ICR) and methylating histone H4 to form H4R3me2s, possibly leading to recruit DNA methyltransferases at these sites. May also play a role in embryonic stem cell (ESC) pluripotency. Also able to mediate the arginine methylation of histone H2A and myelin basic protein (MBP) in vitro; the relevance of such results is however unclear in vivo. This chain is Protein arginine N-methyltransferase 7 (PRMT7), found in Bos taurus (Bovine).